The following is a 373-amino-acid chain: Glycerol-3-phosphate dehydrogenase [NAD(+)] 2 (373 aa).

Position 15 is a phosphoserine (S15). NAD(+)-binding positions include 31–36, F123, K146, and A179; that span reads GSGNWG. K146 lines the substrate pocket. K236 functions as the Proton acceptor in the catalytic mechanism. 2 residues coordinate NAD(+): R300 and Q329. 300 to 301 contacts substrate; that stretch reads RN.

The protein belongs to the NAD-dependent glycerol-3-phosphate dehydrogenase family.

The protein resides in the cytoplasm. It carries out the reaction sn-glycerol 3-phosphate + NAD(+) = dihydroxyacetone phosphate + NADH + H(+). The chain is Glycerol-3-phosphate dehydrogenase [NAD(+)] 2 (gpd2) from Schizosaccharomyces pombe (strain 972 / ATCC 24843) (Fission yeast).